A 505-amino-acid polypeptide reads, in one-letter code: ATP synthase subunit alpha (505 aa).

Glycine 169–threonine 176 is an ATP binding site.

This sequence belongs to the ATPase alpha/beta chains family. F-type ATPases have 2 components, CF(1) - the catalytic core - and CF(0) - the membrane proton channel. CF(1) has five subunits: alpha(3), beta(3), gamma(1), delta(1), epsilon(1). CF(0) has three main subunits: a(1), b(2) and c(9-12). The alpha and beta chains form an alternating ring which encloses part of the gamma chain. CF(1) is attached to CF(0) by a central stalk formed by the gamma and epsilon chains, while a peripheral stalk is formed by the delta and b chains.

Its subcellular location is the cell membrane. The enzyme catalyses ATP + H2O + 4 H(+)(in) = ADP + phosphate + 5 H(+)(out). Produces ATP from ADP in the presence of a proton gradient across the membrane. The alpha chain is a regulatory subunit. This is ATP synthase subunit alpha from Pediococcus pentosaceus (strain ATCC 25745 / CCUG 21536 / LMG 10740 / 183-1w).